We begin with the raw amino-acid sequence, 219 residues long: Small ribosomal subunit protein uS3c (219 aa).

Positions 47-118 constitute a KH type-2 domain; that stretch reads IKKNIRISSG…KINIAITRIT (72 aa).

The protein belongs to the universal ribosomal protein uS3 family. In terms of assembly, part of the 30S ribosomal subunit.

The protein localises to the plastid. It is found in the chloroplast. This is Small ribosomal subunit protein uS3c (rps3) from Citrus sinensis (Sweet orange).